The sequence spans 346 residues: Heparan sulfate glucosamine 3-O-sulfotransferase 5 (346 aa).

Residues 1-12 are Cytoplasmic-facing; sequence MLFKQQVWLRQK. A helical; Signal-anchor for type II membrane protein membrane pass occupies residues 13 to 32; the sequence is LLVLGSLAVGSLLYLVARVG. Residues 33 to 346 are Lumenal-facing; the sequence is SLDRLQPICP…QITGRTLNWP (314 aa). N75 is a glycosylation site (N-linked (GlcNAc...) asparagine). Residue 100 to 104 participates in 3'-phosphoadenylyl sulfate binding; the sequence is KGGTR. Residues 122 to 128 and 155 to 158 each bind substrate; these read EIHFFDN and KSPA. N173 carries an N-linked (GlcNAc...) asparagine glycan. R183 and S191 together coordinate 3'-phosphoadenylyl sulfate. Residue N204 is glycosylated (N-linked (GlcNAc...) asparagine). 226–227 is a substrate binding site; sequence YK. N287 is a glycosylation site (N-linked (GlcNAc...) asparagine). Residue Y293 participates in 3'-phosphoadenylyl sulfate binding. C294 and C304 form a disulfide bridge. 309-313 serves as a coordination point for 3'-phosphoadenylyl sulfate; the sequence is KGRIH.

Belongs to the sulfotransferase 1 family.

The protein localises to the golgi apparatus membrane. It carries out the reaction alpha-D-glucosaminyl-[heparan sulfate](n) + 3'-phosphoadenylyl sulfate = 3-sulfo-alpha-D-glucosaminyl-[heparan sulfate](n) + adenosine 3',5'-bisphosphate + H(+). Functionally, sulfotransferase that utilizes 3'-phospho-5'-adenylyl sulfate (PAPS) to catalyze the transfer of a sulfo group to position 3 of glucosamine residues in heparan. Catalyzes the rate limiting step in the biosynthesis of heparan sulfate (HSact). This modification is a crucial step in the biosynthesis of anticoagulant heparan sulfate as it completes the structure of the antithrombin pentasaccharide binding site. Also generates GlcUA-GlcNS or IdoUA-GlcNS and IdoUA2S-GlcNH2. The polypeptide is Heparan sulfate glucosamine 3-O-sulfotransferase 5 (Hs3st5) (Mus musculus (Mouse)).